The following is a 283-amino-acid chain: Bifunctional protein FolD 2 (283 aa).

Residues 165–167, Thr-192, and Val-233 each bind NADP(+); that span reads GRG.

It belongs to the tetrahydrofolate dehydrogenase/cyclohydrolase family. As to quaternary structure, homodimer.

It carries out the reaction (6R)-5,10-methylene-5,6,7,8-tetrahydrofolate + NADP(+) = (6R)-5,10-methenyltetrahydrofolate + NADPH. The enzyme catalyses (6R)-5,10-methenyltetrahydrofolate + H2O = (6R)-10-formyltetrahydrofolate + H(+). It participates in one-carbon metabolism; tetrahydrofolate interconversion. Functionally, catalyzes the oxidation of 5,10-methylenetetrahydrofolate to 5,10-methenyltetrahydrofolate and then the hydrolysis of 5,10-methenyltetrahydrofolate to 10-formyltetrahydrofolate. The chain is Bifunctional protein FolD 2 from Saccharopolyspora erythraea (strain ATCC 11635 / DSM 40517 / JCM 4748 / NBRC 13426 / NCIMB 8594 / NRRL 2338).